A 542-amino-acid chain; its full sequence is Excitatory amino acid transporter 1 (542 aa).

The Cytoplasmic portion of the chain corresponds to 1–47; sequence MTKSNGEEARLGGRMERFQQGVRKRTLLAKKKVQNITKEDVKSYLFR. Residues 48-68 traverse the membrane as a helical segment; sequence NAFVLLTVTAVIVGTILGFTL. Over 69–86 the chain is Extracellular; sequence RPYRMSYREVKYFSFPGE. Residues 87 to 108 traverse the membrane as a helical segment; it reads LLMRMLQMLVLPLIISSLVTGM. The Cytoplasmic segment spans residues 109–122; it reads AALDSKASGKMGMR. A helical membrane pass occupies residues 123 to 145; that stretch reads AVVYYMTTTIIAVVIGIIIVIII. The Extracellular portion of the chain corresponds to 146-236; it reads HPGKGTKENM…ITEELVPVPG (91 aa). The helical transmembrane segment at 237 to 260 threads the bilayer; sequence SVNGVNALGLVVFSMCFGFVIGNM. Residues 261-269 lie on the Cytoplasmic side of the membrane; that stretch reads KEQGQALRE. The chain crosses the membrane as a helical span at residues 270–297; sequence FFDSLNEAIMRLVAVIMWYAPLGILFLI. The Extracellular portion of the chain corresponds to 298 to 318; sequence AGKIVEMEDMGVIGGQLAMYT. The helical transmembrane segment at 319–340 threads the bilayer; the sequence is VTVIVGLLIHAVIVLPLLYFLV. Residues 341–345 lie on the Cytoplasmic side of the membrane; sequence TRKNP. An intramembrane region (discontinuously helical) is located at residues 346–376; it reads WVFIGGLLQALITALGTSSSSATLPITFKCL. Residue 363 to 365 coordinates L-aspartate; it reads SSS. At 377–385 the chain is on the cytoplasmic side; sequence EENNGVDKR. The chain crosses the membrane as a helical span at residues 386–412; the sequence is VTRFVLPVGATINMDGTALYEALAAIF. Residues G394, T396, and N398 each contribute to the Na(+) site. Position 402 (T402) interacts with L-aspartate. The Extracellular segment spans residues 413–425; it reads IAQVNNFELNFGQ. Residues 426–459 constitute an intramembrane region (discontinuously helical); sequence IITISITATAASIGAAGIPQAGLVTMVIVLTSVG. 443 to 447 provides a ligand contact to L-aspartate; that stretch reads IPQAG. The Extracellular segment spans residues 460–472; the sequence is LPTDDITLIIAVD. The chain crosses the membrane as a helical span at residues 473-494; that stretch reads WFLDRLRTTTNVLGDSLGAGIV. Positions 476 and 483 each coordinate L-aspartate. Na(+)-binding residues include N483 and D487. Over 495-542 the chain is Cytoplasmic; sequence EHLSRHELKNRDVEMGNSVIEENEMKKPYQLISQESEIEKSMDSETKM. At S512 the chain carries Phosphoserine.

It belongs to the dicarboxylate/amino acid:cation symporter (DAACS) (TC 2.A.23) family. SLC1A3 subfamily. As to quaternary structure, homotrimer. In terms of processing, glycosylated.

Its subcellular location is the cell membrane. It carries out the reaction K(+)(in) + L-glutamate(out) + 3 Na(+)(out) + H(+)(out) = K(+)(out) + L-glutamate(in) + 3 Na(+)(in) + H(+)(in). The enzyme catalyses K(+)(in) + L-aspartate(out) + 3 Na(+)(out) + H(+)(out) = K(+)(out) + L-aspartate(in) + 3 Na(+)(in) + H(+)(in). The catalysed reaction is D-aspartate(out) + K(+)(in) + 3 Na(+)(out) + H(+)(out) = D-aspartate(in) + K(+)(out) + 3 Na(+)(in) + H(+)(in). Sodium-dependent, high-affinity amino acid transporter that mediates the uptake of L-glutamate and also L-aspartate and D-aspartate. Functions as a symporter that transports one amino acid molecule together with two or three Na(+) ions and one proton, in parallel with the counter-transport of one K(+) ion. Plays a redundant role in the rapid removal of released glutamate from the synaptic cleft, which is essential for terminating the postsynaptic action of glutamate. This Bos taurus (Bovine) protein is Excitatory amino acid transporter 1 (SLC1A3).